The sequence spans 87 residues: U14-lycotoxin-Ls1c (87 aa).

An N-terminal signal peptide occupies residues 1–20 (MNSKVFAVLLLLALLTCILS). Positions 21 to 66 (EKYCPTPRNTSCKKMNIKNNCCRDSDCTSNAFCCAEPCGNFCHKAS) constitute a WAP domain. Intrachain disulfides connect cysteine 24–cysteine 54, cysteine 32–cysteine 58, cysteine 41–cysteine 53, cysteine 42–cysteine 80, and cysteine 47–cysteine 62.

The protein belongs to the venom protein 11 family. 01 (wap-1) subfamily. Post-translationally, contains 5 disulfide bonds. Expressed by the venom gland.

The protein resides in the secreted. Functionally, has antibacterial activity. This Lycosa singoriensis (Wolf spider) protein is U14-lycotoxin-Ls1c.